Consider the following 448-residue polypeptide: Na(+)-translocating NADH-quinone reductase subunit A (448 aa).

The protein belongs to the NqrA family. Composed of six subunits; NqrA, NqrB, NqrC, NqrD, NqrE and NqrF.

The catalysed reaction is a ubiquinone + n Na(+)(in) + NADH + H(+) = a ubiquinol + n Na(+)(out) + NAD(+). NQR complex catalyzes the reduction of ubiquinone-1 to ubiquinol by two successive reactions, coupled with the transport of Na(+) ions from the cytoplasm to the periplasm. NqrA to NqrE are probably involved in the second step, the conversion of ubisemiquinone to ubiquinol. The protein is Na(+)-translocating NADH-quinone reductase subunit A of Glaesserella parasuis serovar 5 (strain SH0165) (Haemophilus parasuis).